The chain runs to 115 residues: U3-lycotoxin-Ls1k (115 aa).

Positions 1 to 20 (MKFVLLFGVLLVTLFSYSSA) are cleaved as a signal peptide. A propeptide spanning residues 21–44 (EMFDDFDQADEDELLSLIEKEEAR) is cleaved from the precursor. Intrachain disulfides connect cysteine 48/cysteine 63, cysteine 55/cysteine 72, cysteine 62/cysteine 87, and cysteine 74/cysteine 85.

The protein belongs to the neurotoxin 19 (CSTX) family. 01 subfamily. Expressed by the venom gland.

Its subcellular location is the secreted. The chain is U3-lycotoxin-Ls1k from Lycosa singoriensis (Wolf spider).